The primary structure comprises 263 residues: Eukaryotic translation initiation factor 3 subunit J-B (263 aa).

Composition is skewed to acidic residues over residues 1-13 and 30-50; these read MADS…DNFE and EGED…EEKE. 2 disordered regions span residues 1–75 and 214–235; these read MADS…DKIK and KQKQ…VPGG. Residues 30-127 are a coiled coil; that stretch reads EGEDEEEDVK…EADMELAREA (98 aa). Residues 51 to 75 are compositionally biased toward basic and acidic residues; sequence EEKKVEQKIAEVKPPEKKKLSDKIK.

The protein belongs to the eIF-3 subunit J family. In terms of assembly, component of the eukaryotic translation initiation factor 3 (eIF-3) complex, which is composed of 13 subunits: eif3a, eif3b, eif3c, eif3d, eif3e, eif3f, eif3g, eif3h, eif3i, eif3j, eif3k, eif3l and eif3m.

The protein resides in the cytoplasm. Its function is as follows. Component of the eukaryotic translation initiation factor 3 (eIF-3) complex, which is involved in protein synthesis of a specialized repertoire of mRNAs and, together with other initiation factors, stimulates binding of mRNA and methionyl-tRNAi to the 40S ribosome. The eIF-3 complex specifically targets and initiates translation of a subset of mRNAs involved in cell proliferation. This is Eukaryotic translation initiation factor 3 subunit J-B (eif3jb) from Danio rerio (Zebrafish).